The primary structure comprises 459 residues: Cysteine--tRNA ligase (459 aa).

A Zn(2+)-binding site is contributed by cysteine 29. The 'HIGH' region signature appears at 31-41 (MTVYDLCHLGH). Zn(2+)-binding residues include cysteine 213, histidine 238, and glutamate 242. The short motif at 270–274 (KMSKS) is the 'KMSKS' region element. ATP is bound at residue lysine 273.

Belongs to the class-I aminoacyl-tRNA synthetase family. Monomer. Zn(2+) serves as cofactor.

The protein localises to the cytoplasm. The catalysed reaction is tRNA(Cys) + L-cysteine + ATP = L-cysteinyl-tRNA(Cys) + AMP + diphosphate. The chain is Cysteine--tRNA ligase from Albidiferax ferrireducens (strain ATCC BAA-621 / DSM 15236 / T118) (Rhodoferax ferrireducens).